Here is a 329-residue protein sequence, read N- to C-terminus: Sideroflexin (329 aa).

5 helical membrane passes run 95–115, 147–167, 183–203, 238–258, and 274–294; these read AFLP…ASIG, ILEA…GLGW, LRMM…VLIM, FSRA…MGLF, and LNLA…IALF.

It belongs to the sideroflexin family.

The protein resides in the mitochondrion membrane. Its function is as follows. Mitochondrial amino-acid transporter that mediates transport of serine into mitochondria. The sequence is that of Sideroflexin from Dictyostelium discoideum (Social amoeba).